We begin with the raw amino-acid sequence, 236 residues long: 7-cyano-7-deazaguanine synthase (236 aa).

21–31 (LSGGLDSATVL) serves as a coordination point for ATP. The Zn(2+) site is built by C202, C212, C215, and C218.

Belongs to the QueC family. Zn(2+) serves as cofactor.

The enzyme catalyses 7-carboxy-7-deazaguanine + NH4(+) + ATP = 7-cyano-7-deazaguanine + ADP + phosphate + H2O + H(+). It functions in the pathway purine metabolism; 7-cyano-7-deazaguanine biosynthesis. In terms of biological role, catalyzes the ATP-dependent conversion of 7-carboxy-7-deazaguanine (CDG) to 7-cyano-7-deazaguanine (preQ(0)). This is 7-cyano-7-deazaguanine synthase from Frankia casuarinae (strain DSM 45818 / CECT 9043 / HFP020203 / CcI3).